A 451-amino-acid polypeptide reads, in one-letter code: Chromosomal replication initiator protein DnaA (451 aa).

The tract at residues 1-71 (MSEKEIWDKV…QAIIYDVIGY (71 aa)) is domain I, interacts with DnaA modulators. Residues 71–112 (YEVKPHFISEDELASYNNVNTQEVQEPQVQHSSIDDKTWGKE) form a domain II region. The segment at 113 to 329 (QFNMHNTFDT…GALTRLLAYS (217 aa)) is domain III, AAA+ region. ATP is bound by residues Gly-157, Gly-159, Lys-160, and Thr-161. Residues 330 to 451 (KLQGKPITTE…ENLEKEIRNQ (122 aa)) are domain IV, binds dsDNA.

Belongs to the DnaA family. As to quaternary structure, oligomerizes as a right-handed, spiral filament on DNA at oriC.

The protein resides in the cytoplasm. Its function is as follows. Plays an essential role in the initiation and regulation of chromosomal replication. ATP-DnaA binds to the origin of replication (oriC) to initiate formation of the DNA replication initiation complex once per cell cycle. Binds the DnaA box (a 9 base pair repeat at the origin) and separates the double-stranded (ds)DNA. Forms a right-handed helical filament on oriC DNA; dsDNA binds to the exterior of the filament while single-stranded (ss)DNA is stabiized in the filament's interior. The ATP-DnaA-oriC complex binds and stabilizes one strand of the AT-rich DNA unwinding element (DUE), permitting loading of DNA polymerase. After initiation quickly degrades to an ADP-DnaA complex that is not apt for DNA replication. Binds acidic phospholipids. The polypeptide is Chromosomal replication initiator protein DnaA (Staphylococcus epidermidis (strain ATCC 12228 / FDA PCI 1200)).